A 466-amino-acid chain; its full sequence is Cysteine--tRNA ligase (466 aa).

Zn(2+) is bound at residue cysteine 29. The 'HIGH' region motif lies at 31–41 (PTVYDFAHIGN). Zn(2+)-binding residues include cysteine 210, histidine 235, and glutamate 239. The short motif at 267–271 (KMSKS) is the 'KMSKS' region element. Lysine 270 lines the ATP pocket.

It belongs to the class-I aminoacyl-tRNA synthetase family. As to quaternary structure, monomer. It depends on Zn(2+) as a cofactor.

Its subcellular location is the cytoplasm. It catalyses the reaction tRNA(Cys) + L-cysteine + ATP = L-cysteinyl-tRNA(Cys) + AMP + diphosphate. This Solibacter usitatus (strain Ellin6076) protein is Cysteine--tRNA ligase.